The following is a 299-amino-acid chain: Aliphatic sulfonates import ATP-binding protein SsuB (299 aa).

Residues 36–257 enclose the ABC transporter domain; that stretch reads LHVQQVIKRY…QHGSAAFAQI (222 aa). 68–75 serves as a coordination point for ATP; sequence GRSGCGKS.

It belongs to the ABC transporter superfamily. Aliphatic sulfonates importer (TC 3.A.1.17.2) family. As to quaternary structure, the complex is composed of two ATP-binding proteins (SsuB), two transmembrane proteins (SsuC) and a solute-binding protein (SsuA).

It localises to the cell inner membrane. It carries out the reaction ATP + H2O + aliphatic sulfonate-[sulfonate-binding protein]Side 1 = ADP + phosphate + aliphatic sulfonateSide 2 + [sulfonate-binding protein]Side 1.. Its function is as follows. Part of the ABC transporter complex SsuABC involved in aliphatic sulfonates import. Responsible for energy coupling to the transport system. In Cupriavidus pinatubonensis (strain JMP 134 / LMG 1197) (Cupriavidus necator (strain JMP 134)), this protein is Aliphatic sulfonates import ATP-binding protein SsuB.